Here is a 329-residue protein sequence, read N- to C-terminus: DNA repair and recombination protein RadA (329 aa).

107–114 contributes to the ATP binding site; that stretch reads GEFGSGKS.

Belongs to the eukaryotic RecA-like protein family.

Its function is as follows. Involved in DNA repair and in homologous recombination. Binds and assemble on single-stranded DNA to form a nucleoprotein filament. Hydrolyzes ATP in a ssDNA-dependent manner and promotes DNA strand exchange between homologous DNA molecules. In Methanocorpusculum labreanum (strain ATCC 43576 / DSM 4855 / Z), this protein is DNA repair and recombination protein RadA.